A 440-amino-acid chain; its full sequence is Indoleamine 2,3-dioxygenase qulI (440 aa).

H347 provides a ligand contact to heme.

This sequence belongs to the indoleamine 2,3-dioxygenase family. In terms of assembly, monomer. Heme is required as a cofactor.

The enzyme catalyses D-tryptophan + O2 = N-formyl-D-kynurenine. It carries out the reaction L-tryptophan + O2 = N-formyl-L-kynurenine. Its pathway is secondary metabolite biosynthesis. Indoleamine 2,3-dioxygenase; part of the gene cluster that mediates the biosynthesis of quinolactacin A2 (QUL A2), a fungal alkaloid that features a quinolone-gamma-lactam hybrid, which is a potential pharmacophore for the treatment of cancer and Alzheimer's disease. The quinolone-gamma-lactam hybrid scaffold is synthesized from the combination of L-isoleucine (L-Ile) and the nonproteinogenic amino acid L-kynurenine, followed by quinolone cyclization, oxidative decarboxylation, and lactam formation. Additionally, the N-methyl group is derived from methionine, which might be catalyzed by an S-adenosylmethionine (SAM)-dependent methyltransferase. Bioconversion of L-tryptophan to L-kynurenine could be catalyzed by the indoleamine-2,3-dioxygenase (IDO) qulI to produce an unstable product, N-formyl-L-kynurenine, followed by kynurenine formamidase catalyzed hydrolysis. QulM then acts as a methyltransferase that methylates L-kynurenine at the N-4 position. The FMN-dependent alpha-hydroxy acid dehydrogenase qulF than functions as an oxidative decarboxylase which converts N-methylkynurenine into 2-aminobenzoylacetamide via 2 tandem reactions, including dehydrogenation and decarboxylation. An amidase located outside of the qul gene cluster further produces the unstable beta-keto acid precursor N-methyl-2-aminobenzoylacetate, which could be spontaneously dehydrated to form N-methyl-4-hydroxy-2-quinolone. The NRPS qulB is able to incorporate N-methyl-2-aminobenzoylacetate and efficiently compete with the spontaneous reaction. By further extending the beta-keto acid with L-Ile, qulA performs a Dieckmann condensation to form the gamma-lactam ring and release a 4-ketopyrrolidinone intermediate from the assembly line. This intermediate could plausibly further undergo a spontaneous cyclization to yield the final quinolone-gamma-lactam hybrid structure. The sequence is that of Indoleamine 2,3-dioxygenase qulI from Penicillium citrinum.